Here is a 132-residue protein sequence, read N- to C-terminus: Large ribosomal subunit protein bL17 (132 aa).

Belongs to the bacterial ribosomal protein bL17 family. In terms of assembly, part of the 50S ribosomal subunit. Contacts protein L32.

The protein is Large ribosomal subunit protein bL17 of Anaplasma phagocytophilum (strain HZ).